The primary structure comprises 2091 residues: Protein Ycf2 (2091 aa).

The segment at 191–210 is disordered; the sequence is DSSQLKGSSDQSRDPLDSIS. 1432–1439 lines the ATP pocket; the sequence is GSIGTGRS.

This sequence belongs to the Ycf2 family.

It localises to the plastid. The protein resides in the chloroplast stroma. Functionally, probable ATPase of unknown function. Its presence in a non-photosynthetic plant (Epifagus virginiana) and experiments in tobacco indicate that it has an essential function which is probably not related to photosynthesis. The sequence is that of Protein Ycf2 from Daucus carota (Wild carrot).